Consider the following 407-residue polypeptide: Probable succinyl-diaminopimelate desuccinylase (407 aa).

Residue His-72 participates in Zn(2+) binding. Asp-74 is an active-site residue. Asp-105 serves as a coordination point for Zn(2+). Glu-139 serves as the catalytic Proton acceptor. Residues Glu-140, Glu-165, and His-378 each coordinate Zn(2+).

This sequence belongs to the peptidase M20A family. Requires Zn(2+) as cofactor. Co(2+) is required as a cofactor.

It catalyses the reaction N-succinyl-(2S,6S)-2,6-diaminopimelate + H2O = (2S,6S)-2,6-diaminopimelate + succinate. The protein operates within amino-acid biosynthesis; L-lysine biosynthesis via DAP pathway; LL-2,6-diaminopimelate from (S)-tetrahydrodipicolinate (succinylase route): step 3/3. This chain is Probable succinyl-diaminopimelate desuccinylase (dapE), found in Staphylococcus aureus (strain MRSA252).